Consider the following 51-residue polypeptide: Large ribosomal subunit protein eL39 (51 aa).

Belongs to the eukaryotic ribosomal protein eL39 family.

The chain is Large ribosomal subunit protein eL39 (rpl39e) from Aeropyrum pernix (strain ATCC 700893 / DSM 11879 / JCM 9820 / NBRC 100138 / K1).